The following is a 156-amino-acid chain: MPRKGPAPKRPVIIDPVYSSPLVTSLINKILLDGKRSTAERIVYGAMEGLREKTGNDPVITLKRALENVKPSLEVKSRRVGGATYQVPIEVKPGRASTLALRWLVGYSRARREKTMTERLMNELLDASNGLGASVKKREDTHKMAESNKAFAHYRW.

This sequence belongs to the universal ribosomal protein uS7 family. As to quaternary structure, part of the 30S ribosomal subunit. Contacts proteins S9 and S11.

In terms of biological role, one of the primary rRNA binding proteins, it binds directly to 16S rRNA where it nucleates assembly of the head domain of the 30S subunit. Is located at the subunit interface close to the decoding center, probably blocks exit of the E-site tRNA. This chain is Small ribosomal subunit protein uS7, found in Streptomyces griseus subsp. griseus (strain JCM 4626 / CBS 651.72 / NBRC 13350 / KCC S-0626 / ISP 5235).